A 72-amino-acid polypeptide reads, in one-letter code: NAD(P)H-quinone oxidoreductase subunit O (72 aa).

This sequence belongs to the complex I NdhO subunit family. As to quaternary structure, NDH-1 can be composed of about 15 different subunits; different subcomplexes with different compositions have been identified which probably have different functions.

The protein resides in the cellular thylakoid membrane. The enzyme catalyses a plastoquinone + NADH + (n+1) H(+)(in) = a plastoquinol + NAD(+) + n H(+)(out). The catalysed reaction is a plastoquinone + NADPH + (n+1) H(+)(in) = a plastoquinol + NADP(+) + n H(+)(out). In terms of biological role, NDH-1 shuttles electrons from an unknown electron donor, via FMN and iron-sulfur (Fe-S) centers, to quinones in the respiratory and/or the photosynthetic chain. The immediate electron acceptor for the enzyme in this species is believed to be plastoquinone. Couples the redox reaction to proton translocation, and thus conserves the redox energy in a proton gradient. Cyanobacterial NDH-1 also plays a role in inorganic carbon-concentration. The polypeptide is NAD(P)H-quinone oxidoreductase subunit O (Synechococcus sp. (strain JA-3-3Ab) (Cyanobacteria bacterium Yellowstone A-Prime)).